The sequence spans 313 residues: Adhesin MafA 2 (313 aa).

An N-terminal signal peptide occupies residues 1–14 (MKTLLLLIPLVLTA). Cysteine 15 carries N-palmitoyl cysteine lipidation. Residue cysteine 15 is the site of S-diacylglycerol cysteine attachment. Positions 282-297 (GDTTAQNRPDFKQNNG) are enriched in polar residues. The segment at 282-313 (GDTTAQNRPDFKQNNGKKPDVGNEVIRRRKGG) is disordered.

Belongs to the MafA family.

It is found in the cell outer membrane. The polypeptide is Adhesin MafA 2 (mafA2) (Neisseria meningitidis serogroup C / serotype 2a (strain ATCC 700532 / DSM 15464 / FAM18)).